The chain runs to 266 residues: Undecaprenyl-diphosphatase (266 aa).

The next 8 helical transmembrane spans lie at 3 to 23 (MSLLSIVLLGIVEGVTEFLPV), 41 to 61 (GTETFDIVIQLGAILAVVVLY), 86 to 106 (VLVGFLPSAVIGAVAYGAIKA), 108 to 128 (LNTPIIVAVALILGGIAILVI), 149 to 171 (FGVGLVQCLSMIPGVSRSGATIM), 184 to 204 (AEYSFFLAIPTMLGATTLALW), 220 to 240 (IGFVVSFIVAMLVIRWFLGVV), and 245 to 265 (FAPFAWYRIIAGTAALIWLLA).

The protein belongs to the UppP family.

The protein resides in the cell inner membrane. The catalysed reaction is di-trans,octa-cis-undecaprenyl diphosphate + H2O = di-trans,octa-cis-undecaprenyl phosphate + phosphate + H(+). Catalyzes the dephosphorylation of undecaprenyl diphosphate (UPP). Confers resistance to bacitracin. The polypeptide is Undecaprenyl-diphosphatase (Rhizorhabdus wittichii (strain DSM 6014 / CCUG 31198 / JCM 15750 / NBRC 105917 / EY 4224 / RW1) (Sphingomonas wittichii)).